The primary structure comprises 1502 residues: MADRFSRFNEDRDFQGNHFDQYEEGHLEIEQASLDKPIESDNIGHRLLQKHGWKLGQGLGKSLQGRTDPIPIVVKYDVMGMGRMEMELDYAEDATERRRVLEVEKEDTEELRQKYKDYVDKEKAIAKALEDLRANFYCELCDKQYQKHQEFDNHINSYDHAHKQRLKDLKQREFARNVSSRSRKDEKKQEKALRRLHELAEQRKQAECAPGSGPMFKPTTVAVDEEGGEDDKDESATNSGTGATASCGLGSEFSTDKGGPFTAVQITNTTGLAQAPGLASQGISFGIKNNLGTPLQKLGVSFSFAKKAPVKLESIASVFKDHAEEGTSEDGTKPDEKSSDQGLQKVGDSDGSSNLDGKKEDEDPQDGGSLASTLSKLKRMKREEGAGATEPEYYHYIPPAHCKVKPNFPFLLFMRASEQMDGDNTTHPKNAPESKKGSSPKPKSCIKAAASQGAEKTVSEVSEQPKETSMTEPSEPGSKAEAKKALGGDVSDQSLESHSQKVSETQMCESNSSKETSLATPAGKESQEGPKHPTGPFFPVLSKDESTALQWPSELLIFTKAEPSISYSCNPLYFDFKLSRNKDARTKGTEKPKDIGSSSKDHLQGLDPGEPNKSKEVGGEKIVRSSGGRMDAPASGSACSGLNKQEPGGSHGSETEDTGRSLPSKKERSGKSHRHKKKKKHKKSSKHKRKHKADTEEKSSKAESGEKSKKRKKRKRKKNKSSAPADSERGPKPEPPGSGSPAPPRRRRRAQDDSQRRSLPAEEGSSGKKDEGGGGSSSQDHGGRKHKGELPPSSCQRRAGTKRSSRSSHRSQPSSGDEDSDDASSHRLHQKSPSQYSEEEEEEDSGSEHSRSRSRSGRRHSSHRSSRRSYSSSSDASSDQSCYSRQRSYSDDSYSDYSDRSRRHSKRSHDSDDSDYASSKHRSKRHKYSSSDDDYSLSCSQSRSRSRSHTRERSRSRGRSRSSSCSRSRSKRRSRSTTAHSWQRSRSYSRDRSRSTRSPSQRSGSRKRSWGHESPEERHSGRRDFIRSKIYRSQSPHYFRSGRGEGPGKKDDGRGDDSKATGPPSQNSNIGTGRGSEGDCSPEDKNSVTAKLLLEKIQSRKVERKPSVSEEVQATPNKAGPKLKDPPQGYFGPKLPPSLGNKPVLPLIGKLPATRKPNKKCEESGLERGEEQEQSETEEGPPGSSDALFGHQFPSEETTGPLLDPPPEESKSGEATADHPVAPLGTPAHSDCYPGDPTISHNYLPDPSDGDTLESLDSSSQPGPVESSLLPIAPDLEHFPSYAPPSGDPSIESTDGAEDASLAPLESQPITFTPEEMEKYSKLQQAAQQHIQQQLLAKQVKAFPASAALAPATPALQPIHIQQPATASATSITTVQHAILQHHAAAAAAAIGIHPHPHPQPLAQVHHIPQPHLTPISLSHLTHSIIPGHPATFLASHPIHIIPASAIHPGPFTFHPVPHAALYPTLLAPRPAAAAATALHLHPLLHPIFSGQDLQHPPSHGT.

In terms of domain architecture, G-patch spans 40–86; it reads SDNIGHRLLQKHGWKLGQGLGKSLQGRTDPIPIVVKYDVMGMGRMEM. A coiled-coil region spans residues 89–124; that stretch reads DYAEDATERRRVLEVEKEDTEELRQKYKDYVDKEKA. Residues 136–160 form a C2H2-type zinc finger; the sequence is FYCELCDKQYQKHQEFDNHINSYDH. Residues 172 to 251 form a disordered region; it reads REFARNVSSR…GATASCGLGS (80 aa). The span at 182 to 206 shows a compositional bias: basic and acidic residues; it reads SRKDEKKQEKALRRLHELAEQRKQA. The segment covering 223–233 has biased composition (acidic residues); sequence VDEEGGEDDKD. Residue Lys-311 forms a Glycyl lysine isopeptide (Lys-Gly) (interchain with G-Cter in SUMO2) linkage. Composition is skewed to basic and acidic residues over residues 323-339 and 424-436; these read AEEG…EKSS and NTTH…ESKK. Disordered stretches follow at residues 323–391 and 419–541; these read AEEG…ATEP and QMDG…FPVL. The segment covering 459-472 has biased composition (polar residues); the sequence is SEVSEQPKETSMTE. Residue Lys-479 is modified to N6-acetyllysine. Ser-491 carries the post-translational modification Phosphoserine. Residues 491–519 are compositionally biased toward polar residues; that stretch reads SDQSLESHSQKVSETQMCESNSSKETSLA. Residue Lys-577 forms a Glycyl lysine isopeptide (Lys-Gly) (interchain with G-Cter in SUMO2) linkage. 2 stretches are compositionally biased toward basic and acidic residues: residues 579–623 and 653–670; these read SRNK…EKIV and SETE…ERSG. A disordered region spans residues 579 to 1301; the sequence is SRNKDARTKG…ESTDGAEDAS (723 aa). Ser-653 is subject to Phosphoserine. The segment covering 671 to 692 has biased composition (basic residues); the sequence is KSHRHKKKKKHKKSSKHKRKHK. Basic and acidic residues predominate over residues 693 to 707; sequence ADTEEKSSKAESGEK. The span at 708 to 720 shows a compositional bias: basic residues; the sequence is SKKRKKRKRKKNK. A compositionally biased stretch (pro residues) spans 733–743; the sequence is PEPPGSGSPAP. Phosphoserine occurs at positions 738, 740, and 758. Basic and acidic residues predominate over residues 750-772; sequence AQDDSQRRSLPAEEGSSGKKDEG. 2 stretches are compositionally biased toward basic residues: residues 799–809 and 852–867; these read AGTKRSSRSSH and SRSR…RSSR. Positions 868–896 are enriched in low complexity; that stretch reads RSYSSSSDASSDQSCYSRQRSYSDDSYSD. 2 positions are modified to phosphoserine: Ser-911 and Ser-914. The span at 919–928 shows a compositional bias: basic residues; sequence SKHRSKRHKY. Ser-981, Ser-1009, Ser-1014, Ser-1033, and Ser-1035 each carry phosphoserine. The span at 1010–1027 shows a compositional bias: basic and acidic residues; that stretch reads WGHESPEERHSGRRDFIR. A compositionally biased stretch (basic and acidic residues) spans 1042 to 1059; it reads GRGEGPGKKDDGRGDDSK. The residue at position 1081 (Ser-1081) is a Phosphoserine. Basic and acidic residues-rich tracts occupy residues 1093–1108 and 1159–1171; these read LLEK…KPSV and KKCE…RGEE. Residue Lys-1105 forms a Glycyl lysine isopeptide (Lys-Gly) (interchain with G-Cter in SUMO2) linkage. The residue at position 1107 (Ser-1107) is a Phosphoserine. Ser-1175 carries the phosphoserine modification.

In Homo sapiens (Human), this protein is G patch domain-containing protein 8 (GPATCH8).